The chain runs to 314 residues: Deoxymugineic acid synthase 1-D (314 aa).

A disordered region spans residues methionine 1–glutamine 21. Aspartate 44 serves as a coordination point for NADP(+). Tyrosine 49 serves as the catalytic Proton donor. Substrate is bound at residue histidine 112. NADP(+)-binding positions include alanine 158–asparagine 159, glutamine 180, phenylalanine 258–asparagine 266, and glutamate 273–arginine 281.

This sequence belongs to the aldo/keto reductase family. Mostly expressed in root tissues, observed, at low levels, in mesocotyl and embryonic roots, seedling roots, crown and seedling leafes, mature bracts, anthers, pistil, caryopsis and embryos.

The catalysed reaction is 2'-deoxymugineate + NAD(+) = 3''-deamino-3''-oxonicotianamine + NADH + H(+). The enzyme catalyses 2'-deoxymugineate + NADP(+) = 3''-deamino-3''-oxonicotianamine + NADPH + H(+). It participates in siderophore biosynthesis. Catalyzes the reduction of a 3''-keto intermediate during the biosynthesis of 2'-deoxymugineic acid (DMA) from L-Met. Involved in the formation of phytosiderophores (MAs) belonging to the mugineic acid family and required to acquire iron. In Triticum aestivum (Wheat), this protein is Deoxymugineic acid synthase 1-D.